The chain runs to 196 residues: dCTP deaminase, dUMP-forming (196 aa).

DCTP contacts are provided by residues 101-106 (KSSLGR), Asp-119, 127-129 (TLE), Gln-148, Tyr-162, and Gln-174. Glu-129 serves as the catalytic Proton donor/acceptor.

Belongs to the dCTP deaminase family. In terms of assembly, homotrimer.

The enzyme catalyses dCTP + 2 H2O = dUMP + NH4(+) + diphosphate. It participates in pyrimidine metabolism; dUMP biosynthesis; dUMP from dCTP: step 1/1. In terms of biological role, bifunctional enzyme that catalyzes both the deamination of dCTP to dUTP and the hydrolysis of dUTP to dUMP without releasing the toxic dUTP intermediate. This is dCTP deaminase, dUMP-forming from Tropheryma whipplei (strain TW08/27) (Whipple's bacillus).